Here is a 63-residue protein sequence, read N- to C-terminus: Toxin S6C6 (63 aa).

5 disulfides stabilise this stretch: Cys3–Cys24, Cys6–Cys11, Cys17–Cys39, Cys43–Cys55, and Cys56–Cys61.

This sequence belongs to the three-finger toxin family. Ancestral subfamily. Orphan group XIX sub-subfamily. Expressed by the venom gland.

The protein resides in the secreted. Functionally, may enhance presynaptic acetylcholine release. This Dendroaspis jamesoni kaimosae (Eastern Jameson's mamba) protein is Toxin S6C6.